Here is a 375-residue protein sequence, read N- to C-terminus: E3 ubiquitin-protein ligase FANCL (375 aa).

An N-acetylalanine modification is found at alanine 2. Residues 104 to 294 are UBC-RWD region (URD); that stretch reads LPPPPQFYSS…KDVLEIDFPA (191 aa). Residues cysteine 307, cysteine 310, cysteine 324, cysteine 329, histidine 334, cysteine 337, cysteine 359, and cysteine 362 each contribute to the Zn(2+) site. An RING-type; degenerate zinc finger spans residues 307-363; sequence CGICYAYQLDGTIPDQVCDNSQCGQPFHQICLYEWLRGLLTSRQSFNIIFGECPYCS.

Interacts with GGN. Belongs to the multisubunit FA complex composed of FANCA, FANCB, FANCC, FANCE, FANCF, FANCG, FANCL/PHF9 and FANCM. The complex is not found in FA patients. In complex with FANCF, FANCA and FANCG, but not with FANCC, nor FANCE, interacts with HES1; this interaction may be essential for the stability and nuclear localization of FA core complex proteins. Interacts with FANCI. Directly interacts (via the RING-type zinc finger) with UBE2T and UBE2W. In terms of processing, the RING-type zinc finger domain is monoubiquitinated in the presence of UBE2T and UBE2W.

Its subcellular location is the cytoplasm. It is found in the nucleus. The enzyme catalyses S-ubiquitinyl-[E2 ubiquitin-conjugating enzyme]-L-cysteine + [acceptor protein]-L-lysine = [E2 ubiquitin-conjugating enzyme]-L-cysteine + N(6)-ubiquitinyl-[acceptor protein]-L-lysine.. The protein operates within protein modification; protein ubiquitination. Functionally, ubiquitin ligase protein that mediates monoubiquitination of FANCD2 in the presence of UBE2T, a key step in the DNA damage pathway. Also mediates monoubiquitination of FANCI. May stimulate the ubiquitin release from UBE2W. May be required for proper primordial germ cell proliferation in the embryonic stage, whereas it is probably not needed for spermatogonial proliferation after birth. This is E3 ubiquitin-protein ligase FANCL (FANCL) from Homo sapiens (Human).